The primary structure comprises 268 residues: Zinc finger protein SNAI2 (268 aa).

Residues 1-20 (MPRSFLVKKHFNASKKPNYS) are SNAG domain. The tract at residues 80 to 117 (PASLGRVSPPPPSDTSSKDHSGSESPISDEEERLQSKL) is disordered. C2H2-type zinc fingers lie at residues 128–150 (FQCN…KQLH), 159–181 (FSCK…IRTH), 185–207 (CVCK…IRTH), and 213–235 (FSCS…LQTH). The segment at 241–264 (YQCKSCSKTFSRMSLLHKHEESGC) adopts a C2H2-type 5; atypical zinc-finger fold.

Belongs to the snail C2H2-type zinc-finger protein family. In terms of assembly, interacts (via SNAG domain) with LIMD1 (via LIM domains), WTIP (via LIM domains) and AJUBA (via LIM domains). Interacts (via zinc fingers) with KPNA2, KPNB1, and TNPO1. May interact (via zinc fingers) with IPO7. In terms of processing, phosphorylated by GSK3B. Once phosphorylated, it becomes a target for ubiquitination. Post-translationally, ubiquitinated by the SCF(FBXO11) complex; ubiquitination requires previous GSK3B-mediated SNAI2 phosphorylation.

It is found in the nucleus. It localises to the cytoplasm. Functionally, transcriptional repressor that modulates both activator-dependent and basal transcription. Involved in the generation and migration of neural crest cells. Plays a role in mediating RAF1-induced transcriptional repression of the TJ protein, occludin (OCLN) and subsequent oncogenic transformation of epithelial cells. Represses BRCA2 expression by binding to its E2-box-containing silencer and recruiting CTBP1 and HDAC1 in breast cells. In epidermal keratinocytes, binds to the E-box in ITGA3 promoter and represses its transcription. Involved in the regulation of ITGB1 and ITGB4 expression and cell adhesion and proliferation in epidermal keratinocytes. Binds to E-box2 domain of BSG and activates its expression during TGFB1-induced epithelial-mesenchymal transition (EMT) in hepatocytes. Represses E-Cadherin/CDH1 transcription via E-box elements. Involved in osteoblast maturation. Binds to RUNX2 and SOC9 promoters and may act as a positive and negative transcription regulator, respectively, in osteoblasts. Binds to CXCL12 promoter via E-box regions in mesenchymal stem cells and osteoblasts. Plays an essential role in TWIST1-induced EMT and its ability to promote invasion and metastasis. The protein is Zinc finger protein SNAI2 (SNAI2) of Bos taurus (Bovine).